The chain runs to 54 residues: Relaxin (54 aa).

Gln1 is subject to Pyrrolidone carboxylic acid. 3 disulfides stabilise this stretch: Cys10-Cys41, Cys22-Cys54, and Cys40-Cys45.

Belongs to the insulin family. In terms of assembly, heterodimer of a B chain and an A chain linked by two disulfide bonds.

Its subcellular location is the secreted. In terms of biological role, relaxin is an ovarian hormone that acts with estrogen to produce dilatation of the birth canal in many mammals. The polypeptide is Relaxin (Balaenoptera edeni (Pigmy Bryde's whale)).